Here is a 524-residue protein sequence, read N- to C-terminus: Acetyl-CoA hydrolase (524 aa).

G279–I283 is a binding site for CoA. The 5-glutamyl coenzyme A thioester intermediate role is filled by E304. G398 contributes to the CoA binding site.

The protein belongs to the acetyl-CoA hydrolase/transferase family.

It is found in the cytoplasm. The enzyme catalyses acetyl-CoA + H2O = acetate + CoA + H(+). In terms of biological role, presumably involved in regulating the intracellular acetyl-CoA pool for fatty acid and cholesterol synthesis and fatty acid oxidation. The polypeptide is Acetyl-CoA hydrolase (ACH1) (Yarrowia lipolytica (strain CLIB 122 / E 150) (Yeast)).